The following is a 381-amino-acid chain: EPS I polysaccharide export outer membrane protein EpsA (381 aa).

A signal peptide spans 1–23 (MFVSIPNIRKAVVSLSVVPLLAA). C24 is lipidated: N-palmitoyl cysteine. Residue C24 is the site of S-diacylglycerol cysteine attachment.

It belongs to the BexD/CtrA/VexA family.

Its subcellular location is the cell outer membrane. Probably involved in polymerization and/or export of exopolysaccharide EPS I which functions as a virulence factor. This is EPS I polysaccharide export outer membrane protein EpsA (epsA) from Ralstonia nicotianae (strain ATCC BAA-1114 / GMI1000) (Ralstonia solanacearum).